The chain runs to 967 residues: Leucine-rich repeat-containing G-protein coupled receptor 6 (967 aa).

The N-terminal stretch at 1 to 24 (MPSPPGLRALWLCAALCASRRAGG) is a signal peptide. The Extracellular portion of the chain corresponds to 25 to 567 (APQPGPGPTA…LFESWGIRLA (543 aa)). In terms of domain architecture, LRRNT spans 26-66 (PQPGPGPTACPAPCHCQEDGIMLSADCSELGLSAVPGDLDP). The N-linked (GlcNAc...) asparagine glycan is linked to Asn77. LRR repeat units follow at residues 91 to 112 (FLEE…AFSG), 115 to 136 (SLKI…ALWE), 139 to 160 (SLQS…SFEG), 163 to 186 (SLRH…NNLP), 187 to 208 (ALQA…AFQN), 211 to 232 (SLVV…SFEG), 235 to 256 (NLET…IRTL), 258 to 279 (RLQE…AFMG), 282 to 303 (LLQT…AFQY), 306 to 328 (KLHT…KGTT), 329 to 350 (SLEI…MCQQ), 353 to 374 (RLRV…HRCQ), 375 to 396 (KLEE…TFSQ), 399 to 420 (SLQA…AFST), and 423 to 443 (SLVK…AGLG). N-linked (GlcNAc...) asparagine glycosylation is present at Asn208. The chain crosses the membrane as a helical span at residues 568–588 (VWAIVLLSVLCNGLVLLTVFA). The Cytoplasmic portion of the chain corresponds to 589-598 (GGPVPLPPVK). A helical membrane pass occupies residues 599 to 619 (FVVGAIAGANTLTGISCGLLA). Residues 620–644 (SVDALTFGQFSEYGARWETGLGCRA) are Extracellular-facing. Cysteines 642 and 717 form a disulfide. A helical transmembrane segment spans residues 645 to 665 (TGFLAVLGSEASVLLLTLAAV). At 666–687 (QCSVSVSCVRAYGKSPSLGSVR) the chain is on the cytoplasmic side. The chain crosses the membrane as a helical span at residues 688 to 708 (AGVLGCLALAGLAAALPLASV). Residues 709 to 727 (GEYGASPLCLPYAPPEGQP) are Extracellular-facing. The helical transmembrane segment at 728–748 (AALGFTVALVMMNSFCFLVVA) threads the bilayer. Residues 749–774 (GAYIKLYCDLPRGDFEAVWDCAMVRH) are Cytoplasmic-facing. The chain crosses the membrane as a helical span at residues 775–795 (VAWLIFADGLLYCPVAFLSFA). At 796-809 (SMLGLFPVTPEAVK) the chain is on the extracellular side. A helical membrane pass occupies residues 810 to 830 (SVLLVVLPLPACLNPLLYLLF). At 831–967 (NPHFRDDLRR…PSGLAFASHV (137 aa)) the chain is on the cytoplasmic side.

Belongs to the G-protein coupled receptor 1 family.

It is found in the cell membrane. Its function is as follows. Receptor for R-spondins that potentiates the canonical Wnt signaling pathway and acts as a marker of multipotent stem cells in the epidermis. Upon binding to R-spondins (RSPO1, RSPO2, RSPO3 or RSPO4), associates with phosphorylated LRP6 and frizzled receptors that are activated by extracellular Wnt receptors, triggering the canonical Wnt signaling pathway to increase expression of target genes. In contrast to classical G-protein coupled receptors, does not activate heterotrimeric G-proteins to transduce the signal. May act as a tumor suppressor. In Homo sapiens (Human), this protein is Leucine-rich repeat-containing G-protein coupled receptor 6 (LGR6).